Reading from the N-terminus, the 344-residue chain is MSYALLRPFLFNMDPEHAHEMTLSLLDKAHKARVLGLVYGQSMQPTDCMGLQFSNPVGLAAGLDKNGDYIDALAELGFGFIEVGTVTPKPQVGNDRPRLFRLKQADAIINRMGFNNEGVDYLIENVKRCKYKGNIGINIGKNAATPVEQAADDYVYCLERVYPHASYITVNISSPNTKNLRDLQSGEALTHLLDAIKNRHSQLATEYGFYVPLVLKVAPDLDPLQVDYISQQLLDFEIDGLIATNTTLSRVGVEDLPDGDQAGGLSGRPVSHISTQILQQFSDQLDGKVALIGVGGIDSGAKAVKKIEAGADMVQLYSGLIYKGPGLVQSCIQSIGGYYDAMEN.

FMN contacts are provided by residues 61–65 (AGLDK) and Thr-85. Lys-65 is a binding site for substrate. 110 to 114 (NRMGF) is a substrate binding site. The FMN site is built by Asn-138 and Asn-171. Residue Asn-171 participates in substrate binding. Ser-174 (nucleophile) is an active-site residue. Asn-176 is a binding site for substrate. 2 residues coordinate FMN: Lys-216 and Thr-244. 245–246 (NT) is a substrate binding site. Residues Gly-267, Gly-296, and 317 to 318 (YS) contribute to the FMN site.

Belongs to the dihydroorotate dehydrogenase family. Type 2 subfamily. In terms of assembly, monomer. FMN is required as a cofactor.

It is found in the cell membrane. It carries out the reaction (S)-dihydroorotate + a quinone = orotate + a quinol. It functions in the pathway pyrimidine metabolism; UMP biosynthesis via de novo pathway; orotate from (S)-dihydroorotate (quinone route): step 1/1. Functionally, catalyzes the conversion of dihydroorotate to orotate with quinone as electron acceptor. In Psychrobacter arcticus (strain DSM 17307 / VKM B-2377 / 273-4), this protein is Dihydroorotate dehydrogenase (quinone).